Here is a 778-residue protein sequence, read N- to C-terminus: MADDGMLLNFALPSDVIKPQTKIKGGSWRERLSVKKIAARRATNPKRTADGDGNKDGNESGPRNPNRIQVSGSRPAKRQKTDGGFQKLGEGQAHGQGSGQSKGPKKGQGGSVVSSLFSKNPRPRNAVEEDKNDEPMEDAKPTNAPLIDGLDTFTNLGLSPTLAAHLLTKLELKAPTAIQKASITQLLKEETDAFIQAETGSGKTLAYLLPLVQRIMALSRAKNEGDAKGDTSVHRDSGLFAIILAPTRELCKQISVVLEGLLRCAHWIVAGTVIGGEKKKSEKARLRKGLNILVATPGRLADHLENTQALDVSNVRWLVLDEGDRLMELGFEKELQEIISKLDARQRPSRIPGVPAKRATILCSATLKMNVQKLGEISLKDAVHIKADPADEDGEKTAEDKDGDAFRVPAQLKQSYAIVAAKLRLVTLTAFMKRTFMRKGSVMKAIIFVSCADSVNFHFEVFTRKLAEQLEGDNPDEGSDSEHEKEKEKEKPTPASTHGTVAPATAFSNSSNAVTMYKLHGSLPQHVRTSTLSSFAKNRDPSVLICTDVASRGLDLPNVDLVVEYDPAFSADEHLHRIGRTARLGRDGRALVFLLPGCEENYVEILKRGYRDGGKALTRSTTDDILKRGFGGNIESQKWQLELERWALDNPEYLEMARRAYQSHIRAYATHVANERHIFNIKELHLGHLAKSFALRDRPGKINVPGLRPGKEDTKKDFKAERKSAGGKKRKATGYGGGRDDDDDDDRPSATTDTTLAAQKMRAKMKEQLAGASEFNLA.

The tract at residues 20 to 144 (QTKIKGGSWR…PMEDAKPTNA (125 aa)) is disordered. A compositionally biased stretch (basic and acidic residues) spans 47 to 58 (RTADGDGNKDGN). Residues 61–72 (GPRNPNRIQVSG) are compositionally biased toward polar residues. Residues 92–110 (QAHGQGSGQSKGPKKGQGG) show a composition bias toward gly residues. Over residues 125–140 (NAVEEDKNDEPMEDAK) the composition is skewed to basic and acidic residues. Residues 151–180 (DTFTNLGLSPTLAAHLLTKLELKAPTAIQK) carry the Q motif motif. Residues 184 to 385 (TQLLKEETDA…EISLKDAVHI (202 aa)) form the Helicase ATP-binding domain. 197–204 (AETGSGKT) provides a ligand contact to ATP. The DEAD box signature appears at 321-324 (DEGD). In terms of domain architecture, Helicase C-terminal spans 411-625 (QLKQSYAIVA…ALTRSTTDDI (215 aa)). Acidic residues predominate over residues 470 to 479 (LEGDNPDEGS). Disordered stretches follow at residues 470–503 (LEGD…TVAP) and 700–778 (GKIN…FNLA). 2 stretches are compositionally biased toward basic and acidic residues: residues 480-492 (DSEH…KEKP) and 709-724 (PGKE…ERKS).

The protein belongs to the DEAD box helicase family. DDX31/DBP7 subfamily.

Its subcellular location is the nucleus. It is found in the nucleolus. The catalysed reaction is ATP + H2O = ADP + phosphate + H(+). Its function is as follows. ATP-binding RNA helicase involved in the biogenesis of 60S ribosomal subunits and is required for the normal formation of 25S and 5.8S rRNAs. This is ATP-dependent RNA helicase dbp7 (dbp7) from Emericella nidulans (strain FGSC A4 / ATCC 38163 / CBS 112.46 / NRRL 194 / M139) (Aspergillus nidulans).